A 123-amino-acid polypeptide reads, in one-letter code: WAP four-disulfide core domain protein 2 (123 aa).

The N-terminal stretch at 1 to 26 (MPACRLGLLVASLLLGLLLGLPPVTG) is a signal peptide. WAP domains are found at residues 28–69 (GAEK…VTIC) and 72–122 (PNEK…VTPV). 8 disulfide bridges follow: C35–C61, C44–C65, C48–C60, C54–C69, C79–C109, C92–C113, C96–C108, and C102–C118.

Homotrimer; disulfide-linked. As to expression, detected in the distal parts of the epididymis.

It localises to the secreted. In terms of biological role, broad range protease inhibitor. In Sus scrofa (Pig), this protein is WAP four-disulfide core domain protein 2 (WFDC2).